A 254-amino-acid chain; its full sequence is MQALIFDVDGTLADTETAHLQAFNAAFAEVGLDWHWDAPLYTRLLKVAGGKERLMHYWRMVDPEEARGCKVKETIDAVHAIKTRHYAERVGAGGLPLRPGIARLIAEAGEAGLPLAIATTTTPANLDALLQAHLGADWRGRFAAICDAGTTAIKKPAPDVYLAVLERLGLEAGDCLAIEDSGNGLRAARAAGIPTVVTPTTFSAQDSFEGALLVLPHLGDPAEPMPQHVPGAAHRWADLAALRAWHHGTLIEAT.

Belongs to the HAD-like hydrolase superfamily. CbbY/CbbZ/Gph/YieH family.

This chain is Protein CbbY, plasmid (cbbYP), found in Cupriavidus necator (strain ATCC 17699 / DSM 428 / KCTC 22496 / NCIMB 10442 / H16 / Stanier 337) (Ralstonia eutropha).